The primary structure comprises 238 residues: PCWKGWSEDEQNLWPQRYIQLVVVADHGMFMKYNGDLAAIRKRVHELVNNINGFYRSLNIDVSLTDLEIWSDQDFITVVQSSSAKNTLNSFGEWREADLLRRKSHDHAQLLTAIDLDDDTVGLAYTSSMCNPRKSVAWGQDHSEEPINLLDVGVTMAHELGHNLGMNHDEEKKCHCGASLCIMSPSITEGPSLEFSDDSMGYYQSFLVVVNYNPQCILNKPEDQYYYILSPKHRIYSW.

Residues 17-221 (RYIQLVVVAD…YNPQCILNKP (205 aa)) form the Peptidase M12B domain. Aspartate 106 contributes to the Ca(2+) binding site. Intrachain disulfides connect cysteine 130–cysteine 216 and cysteine 174–cysteine 181. Histidine 158 is a binding site for Zn(2+). Glutamate 159 is an active-site residue. Histidine 162 and histidine 168 together coordinate Zn(2+). Ca(2+) is bound by residues cysteine 216 and asparagine 219.

Monomer. Zn(2+) serves as cofactor. As to expression, expressed by the venom gland.

It is found in the secreted. With respect to regulation, inhibited by EDTA and EGTA. Inhibited by serum and antihemorrhagic factors Da2-I and Da2-II from D.albiventris. Not inhibited by PMSF or SBT-I. Functionally, snake venom zinc metalloprotease that is weakly hemorrhagic and has Aalpha, Bbeta fibrinogenolytic activities. Cleaves the Aalpha chain of fibrinogen first, followed by the Bbeta chain and shows no effect on the gamma chain. Has caseinolytic activity. Induces dose-dependent edema. The protein is Snake venom metalloproteinase HF-1 of Bothrops marajoensis (Marajo lancehead).